Consider the following 462-residue polypeptide: L-seryl-tRNA(Sec) selenium transferase (462 aa).

K294 carries the post-translational modification N6-(pyridoxal phosphate)lysine.

The protein belongs to the SelA family. Homodecamer; pentamer of dimers. Binds only one seryl-tRNA(Sec) per dimer. Requires pyridoxal 5'-phosphate as cofactor.

It localises to the cytoplasm. It catalyses the reaction L-seryl-tRNA(Sec) + selenophosphate + H(+) = L-selenocysteinyl-tRNA(Sec) + phosphate. It participates in aminoacyl-tRNA biosynthesis; selenocysteinyl-tRNA(Sec) biosynthesis; selenocysteinyl-tRNA(Sec) from L-seryl-tRNA(Sec) (bacterial route): step 1/1. Functionally, converts seryl-tRNA(Sec) to selenocysteinyl-tRNA(Sec) required for selenoprotein biosynthesis. This chain is L-seryl-tRNA(Sec) selenium transferase, found in Yersinia enterocolitica serotype O:8 / biotype 1B (strain NCTC 13174 / 8081).